A 239-amino-acid polypeptide reads, in one-letter code: 2,3,4,5-tetrahydropyridine-2,6-dicarboxylate N-acetyltransferase (239 aa).

This sequence belongs to the transferase hexapeptide repeat family. DapH subfamily.

The catalysed reaction is (S)-2,3,4,5-tetrahydrodipicolinate + acetyl-CoA + H2O = L-2-acetamido-6-oxoheptanedioate + CoA. It participates in amino-acid biosynthesis; L-lysine biosynthesis via DAP pathway; LL-2,6-diaminopimelate from (S)-tetrahydrodipicolinate (acetylase route): step 1/3. Functionally, catalyzes the transfer of an acetyl group from acetyl-CoA to tetrahydrodipicolinate. This chain is 2,3,4,5-tetrahydropyridine-2,6-dicarboxylate N-acetyltransferase, found in Staphylococcus haemolyticus (strain JCSC1435).